The sequence spans 384 residues: Tryptophan--tRNA ligase (384 aa).

Residues 81 to 89 (PSGPMHIGH) carry the 'HIGH' region motif. Positions 252–256 (KMSAS) match the 'KMSKS' region motif.

This sequence belongs to the class-I aminoacyl-tRNA synthetase family.

It is found in the cytoplasm. It catalyses the reaction tRNA(Trp) + L-tryptophan + ATP = L-tryptophyl-tRNA(Trp) + AMP + diphosphate + H(+). This chain is Tryptophan--tRNA ligase, found in Thermococcus sibiricus (strain DSM 12597 / MM 739).